A 248-amino-acid polypeptide reads, in one-letter code: Aspartate/glutamate leucyltransferase (248 aa).

This sequence belongs to the R-transferase family. Bpt subfamily.

Its subcellular location is the cytoplasm. It catalyses the reaction N-terminal L-glutamyl-[protein] + L-leucyl-tRNA(Leu) = N-terminal L-leucyl-L-glutamyl-[protein] + tRNA(Leu) + H(+). The catalysed reaction is N-terminal L-aspartyl-[protein] + L-leucyl-tRNA(Leu) = N-terminal L-leucyl-L-aspartyl-[protein] + tRNA(Leu) + H(+). Its function is as follows. Functions in the N-end rule pathway of protein degradation where it conjugates Leu from its aminoacyl-tRNA to the N-termini of proteins containing an N-terminal aspartate or glutamate. This is Aspartate/glutamate leucyltransferase from Methylorubrum populi (strain ATCC BAA-705 / NCIMB 13946 / BJ001) (Methylobacterium populi).